Reading from the N-terminus, the 397-residue chain is Elongation factor Tu (397 aa).

In terms of domain architecture, tr-type G spans 10–207 (KPHVNVGTVG…AIDAYVPDPV (198 aa)). Residues 19–26 (GHIDHGKT) are G1. A GTP-binding site is contributed by 19–26 (GHIDHGKT). Mg(2+) is bound at residue Thr-26. A G2 region spans residues 60 to 64 (GITIA). The tract at residues 81–84 (DCPG) is G3. GTP-binding positions include 81–85 (DCPGH) and 136–139 (NKVD). Positions 136-139 (NKVD) are G4. Residues 174–176 (SAL) are G5.

The protein belongs to the TRAFAC class translation factor GTPase superfamily. Classic translation factor GTPase family. EF-Tu/EF-1A subfamily. In terms of assembly, monomer.

Its subcellular location is the cytoplasm. It carries out the reaction GTP + H2O = GDP + phosphate + H(+). In terms of biological role, GTP hydrolase that promotes the GTP-dependent binding of aminoacyl-tRNA to the A-site of ribosomes during protein biosynthesis. This chain is Elongation factor Tu, found in Syntrophobacter fumaroxidans (strain DSM 10017 / MPOB).